The following is a 280-amino-acid chain: Bifunctional protein FolD (280 aa).

NADP(+) contacts are provided by residues 166-168 and S191; that span reads GRS.

The protein belongs to the tetrahydrofolate dehydrogenase/cyclohydrolase family. As to quaternary structure, homodimer.

It catalyses the reaction (6R)-5,10-methylene-5,6,7,8-tetrahydrofolate + NADP(+) = (6R)-5,10-methenyltetrahydrofolate + NADPH. It carries out the reaction (6R)-5,10-methenyltetrahydrofolate + H2O = (6R)-10-formyltetrahydrofolate + H(+). The protein operates within one-carbon metabolism; tetrahydrofolate interconversion. In terms of biological role, catalyzes the oxidation of 5,10-methylenetetrahydrofolate to 5,10-methenyltetrahydrofolate and then the hydrolysis of 5,10-methenyltetrahydrofolate to 10-formyltetrahydrofolate. The protein is Bifunctional protein FolD of Marinomonas sp. (strain MWYL1).